Consider the following 492-residue polypeptide: Ribose import ATP-binding protein RbsA (492 aa).

ABC transporter domains are found at residues 3–239 and 238–492; these read IDMR…VGRK and RKLE…TGGK. ATP is bound at residue 35-42; it reads GENGAGKS.

This sequence belongs to the ABC transporter superfamily. Ribose importer (TC 3.A.1.2.1) family. As to quaternary structure, the complex is composed of an ATP-binding protein (RbsA), two transmembrane proteins (RbsC) and a solute-binding protein (RbsB).

The protein localises to the cell membrane. The catalysed reaction is D-ribose(out) + ATP + H2O = D-ribose(in) + ADP + phosphate + H(+). Functionally, part of the ABC transporter complex RbsABC involved in ribose import. Responsible for energy coupling to the transport system. The polypeptide is Ribose import ATP-binding protein RbsA (Streptococcus agalactiae serotype Ia (strain ATCC 27591 / A909 / CDC SS700)).